We begin with the raw amino-acid sequence, 235 residues long: tRNA1(Val) (adenine(37)-N6)-methyltransferase (235 aa).

Belongs to the methyltransferase superfamily. tRNA (adenine-N(6)-)-methyltransferase family.

The protein localises to the cytoplasm. It carries out the reaction adenosine(37) in tRNA1(Val) + S-adenosyl-L-methionine = N(6)-methyladenosine(37) in tRNA1(Val) + S-adenosyl-L-homocysteine + H(+). Its function is as follows. Specifically methylates the adenine in position 37 of tRNA(1)(Val) (anticodon cmo5UAC). The polypeptide is tRNA1(Val) (adenine(37)-N6)-methyltransferase (Flavobacterium johnsoniae (strain ATCC 17061 / DSM 2064 / JCM 8514 / BCRC 14874 / CCUG 350202 / NBRC 14942 / NCIMB 11054 / UW101) (Cytophaga johnsonae)).